A 316-amino-acid polypeptide reads, in one-letter code: Probable 5-dehydro-4-deoxyglucarate dehydratase 1 (316 aa).

The protein belongs to the DapA family.

The catalysed reaction is 5-dehydro-4-deoxy-D-glucarate + H(+) = 2,5-dioxopentanoate + CO2 + H2O. The protein operates within carbohydrate acid metabolism; D-glucarate degradation; 2,5-dioxopentanoate from D-glucarate: step 2/2. The chain is Probable 5-dehydro-4-deoxyglucarate dehydratase 1 from Streptomyces coelicolor (strain ATCC BAA-471 / A3(2) / M145).